The sequence spans 459 residues: Putrescine aminotransferase (459 aa).

Pyridoxal 5'-phosphate is bound by residues 150–151 (GT) and Gln-274. The residue at position 300 (Lys-300) is an N6-(pyridoxal phosphate)lysine. A pyridoxal 5'-phosphate-binding site is contributed by Thr-332.

This sequence belongs to the class-III pyridoxal-phosphate-dependent aminotransferase family. Putrescine aminotransferase subfamily. Pyridoxal 5'-phosphate serves as cofactor.

The enzyme catalyses an alkane-alpha,omega-diamine + 2-oxoglutarate = an omega-aminoaldehyde + L-glutamate. It catalyses the reaction putrescine + 2-oxoglutarate = 1-pyrroline + L-glutamate + H2O. The catalysed reaction is cadaverine + 2-oxoglutarate = 5-aminopentanal + L-glutamate. It functions in the pathway amine and polyamine degradation; putrescine degradation; 4-aminobutanal from putrescine (transaminase route): step 1/1. Catalyzes the aminotransferase reaction from putrescine to 2-oxoglutarate, leading to glutamate and 4-aminobutanal, which spontaneously cyclizes to form 1-pyrroline. This is the first step in one of two pathways for putrescine degradation, where putrescine is converted into 4-aminobutanoate (gamma-aminobutyrate or GABA) via 4-aminobutanal. Also functions as a cadaverine transaminase in a a L-lysine degradation pathway to succinate that proceeds via cadaverine, glutarate and L-2-hydroxyglutarate. This is Putrescine aminotransferase from Salmonella heidelberg (strain SL476).